The chain runs to 126 residues: Large ribosomal subunit protein bL19 (126 aa).

It belongs to the bacterial ribosomal protein bL19 family.

Its function is as follows. This protein is located at the 30S-50S ribosomal subunit interface and may play a role in the structure and function of the aminoacyl-tRNA binding site. This chain is Large ribosomal subunit protein bL19, found in Bradyrhizobium diazoefficiens (strain JCM 10833 / BCRC 13528 / IAM 13628 / NBRC 14792 / USDA 110).